The following is a 150-amino-acid chain: MVKKRVVTAGTFDILHPGHYEVLKFAKSLGDELIVIVARDETVKKIKGRKPIIPEEQRREMVEALKPVDKAILGSLKNKLEPILELKPDVIVLGPDQTTFDEETLKEELAKYGLHPEIVRFKGYKKCPFHSSFDIVKEIIRRFCNKEIKI.

ATP-binding positions include Thr-11–Phe-12, His-16–His-19, Asp-96, and Tyr-124.

It belongs to the archaeal FAD synthase family. In terms of assembly, homodimer. The cofactor is a divalent metal cation.

It catalyses the reaction FMN + ATP + H(+) = FAD + diphosphate. Its pathway is cofactor biosynthesis; FAD biosynthesis; FAD from FMN: step 1/1. Its function is as follows. Catalyzes the transfer of the AMP portion of ATP to flavin mononucleotide (FMN) to produce flavin adenine dinucleotide (FAD) coenzyme. The sequence is that of FAD synthase from Methanocaldococcus fervens (strain DSM 4213 / JCM 15782 / AG86) (Methanococcus fervens).